Here is a 764-residue protein sequence, read N- to C-terminus: Polyadenylate-binding protein, cytoplasmic and nuclear (764 aa).

Residues 36–56 (VPEAQAEGAEAAPTPTAAPHP) form a disordered region. RRM domains are found at residues 60–138 (ASLY…WSQR), 148–225 (GNIF…HHIP), 241–318 (TNVY…RAQK), and 344–462 (VNLY…LAQR). Disordered stretches follow at residues 375–420 (VMRD…GDRK) and 587–634 (GRGG…PRGN). Composition is skewed to basic and acidic residues over residues 387–399 (KDEK…KEGE) and 408–420 (GSEK…GDRK). The span at 587-596 (GRGGPAGRGP) shows a compositional bias: gly residues. The span at 597 to 613 (QGIPAGIPQGLQGGPAV) shows a compositional bias: low complexity. Positions 657-734 (GSFLQAQLAT…ALAVYDEYLK (78 aa)) constitute a PABC domain. Polar residues predominate over residues 735–745 (TQGQQPTQQPA). The segment at 735–764 (TQGQQPTQQPAEANGEQPKAEEQKPEEQKA) is disordered. Positions 752-764 (PKAEEQKPEEQKA) are enriched in basic and acidic residues.

It belongs to the polyadenylate-binding protein type-1 family.

It is found in the cytoplasm. The protein localises to the nucleus. In terms of biological role, binds the poly(A) tail of mRNA. Appears to be an important mediator of the multiple roles of the poly(A) tail in mRNA biogenesis, stability and translation. In the nucleus, involved in both mRNA cleavage and polyadenylation. Is also required for efficient mRNA export to the cytoplasm. Acts in concert with a poly(A)-specific nuclease (PAN) to affect poly(A) tail shortening, which may occur concomitantly with either nucleocytoplasmic mRNA transport or translational initiation. In the cytoplasm, stimulates translation initiation and regulates mRNA decay through translation termination-coupled poly(A) shortening, probably mediated by PAN. The polypeptide is Polyadenylate-binding protein, cytoplasmic and nuclear (pabp-1) (Neurospora crassa (strain ATCC 24698 / 74-OR23-1A / CBS 708.71 / DSM 1257 / FGSC 987)).